Here is a 615-residue protein sequence, read N- to C-terminus: Dihydroxy-acid dehydratase (615 aa).

Aspartate 81 provides a ligand contact to Mg(2+). Cysteine 122 serves as a coordination point for [2Fe-2S] cluster. Mg(2+) is bound by residues aspartate 123 and lysine 124. N6-carboxylysine is present on lysine 124. A [2Fe-2S] cluster-binding site is contributed by cysteine 195. Glutamate 491 is a binding site for Mg(2+). Serine 517 serves as the catalytic Proton acceptor.

It belongs to the IlvD/Edd family. In terms of assembly, homodimer. [2Fe-2S] cluster serves as cofactor. It depends on Mg(2+) as a cofactor.

The enzyme catalyses (2R)-2,3-dihydroxy-3-methylbutanoate = 3-methyl-2-oxobutanoate + H2O. The catalysed reaction is (2R,3R)-2,3-dihydroxy-3-methylpentanoate = (S)-3-methyl-2-oxopentanoate + H2O. It participates in amino-acid biosynthesis; L-isoleucine biosynthesis; L-isoleucine from 2-oxobutanoate: step 3/4. It functions in the pathway amino-acid biosynthesis; L-valine biosynthesis; L-valine from pyruvate: step 3/4. Its function is as follows. Functions in the biosynthesis of branched-chain amino acids. Catalyzes the dehydration of (2R,3R)-2,3-dihydroxy-3-methylpentanoate (2,3-dihydroxy-3-methylvalerate) into 2-oxo-3-methylpentanoate (2-oxo-3-methylvalerate) and of (2R)-2,3-dihydroxy-3-methylbutanoate (2,3-dihydroxyisovalerate) into 2-oxo-3-methylbutanoate (2-oxoisovalerate), the penultimate precursor to L-isoleucine and L-valine, respectively. The protein is Dihydroxy-acid dehydratase of Novosphingobium aromaticivorans (strain ATCC 700278 / DSM 12444 / CCUG 56034 / CIP 105152 / NBRC 16084 / F199).